The sequence spans 368 residues: Agmatine deiminase (368 aa).

Catalysis depends on cysteine 357, which acts as the Amidino-cysteine intermediate.

The protein belongs to the agmatine deiminase family. As to quaternary structure, homodimer.

It catalyses the reaction agmatine + H2O = N-carbamoylputrescine + NH4(+). Its pathway is amine and polyamine biosynthesis; putrescine biosynthesis via agmatine pathway; N-carbamoylputrescine from agmatine: step 1/1. Mediates the hydrolysis of agmatine into N-carbamoylputrescine in the arginine decarboxylase (ADC) pathway of putrescine biosynthesis, a basic polyamine. The sequence is that of Agmatine deiminase from Pseudomonas aeruginosa (strain LESB58).